Here is a 151-residue protein sequence, read N- to C-terminus: Small ribosomal subunit protein uS15 (151 aa).

The disordered stretch occupies residues M1 to T20.

The protein belongs to the universal ribosomal protein uS15 family. Part of the 30S ribosomal subunit.

The polypeptide is Small ribosomal subunit protein uS15 (Methanococcus maripaludis (strain DSM 14266 / JCM 13030 / NBRC 101832 / S2 / LL)).